We begin with the raw amino-acid sequence, 217 residues long: UPF0319 protein VP1009 (217 aa).

The first 21 residues, 1–21, serve as a signal peptide directing secretion; sequence MRLKTWIVAFFLGLFGTTVNA.

It belongs to the UPF0319 family.

The sequence is that of UPF0319 protein VP1009 from Vibrio parahaemolyticus serotype O3:K6 (strain RIMD 2210633).